Reading from the N-terminus, the 467-residue chain is Argininosuccinate lyase (467 aa).

This sequence belongs to the lyase 1 family. Argininosuccinate lyase subfamily.

It is found in the cytoplasm. It catalyses the reaction 2-(N(omega)-L-arginino)succinate = fumarate + L-arginine. Its pathway is amino-acid biosynthesis; L-arginine biosynthesis; L-arginine from L-ornithine and carbamoyl phosphate: step 3/3. The polypeptide is Argininosuccinate lyase (Rhizobium johnstonii (strain DSM 114642 / LMG 32736 / 3841) (Rhizobium leguminosarum bv. viciae)).